The following is a 288-amino-acid chain: ATP synthase gamma chain (288 aa).

Belongs to the ATPase gamma chain family. F-type ATPases have 2 components, CF(1) - the catalytic core - and CF(0) - the membrane proton channel. CF(1) has five subunits: alpha(3), beta(3), gamma(1), delta(1), epsilon(1). CF(0) has three main subunits: a, b and c.

It is found in the cell inner membrane. Produces ATP from ADP in the presence of a proton gradient across the membrane. The gamma chain is believed to be important in regulating ATPase activity and the flow of protons through the CF(0) complex. This is ATP synthase gamma chain from Rickettsia canadensis (strain McKiel).